The following is an 882-amino-acid chain: Alanine--tRNA ligase (882 aa).

Positions 568, 572, 670, and 674 each coordinate Zn(2+).

The protein belongs to the class-II aminoacyl-tRNA synthetase family. The cofactor is Zn(2+).

The protein resides in the cytoplasm. It carries out the reaction tRNA(Ala) + L-alanine + ATP = L-alanyl-tRNA(Ala) + AMP + diphosphate. Its function is as follows. Catalyzes the attachment of alanine to tRNA(Ala) in a two-step reaction: alanine is first activated by ATP to form Ala-AMP and then transferred to the acceptor end of tRNA(Ala). Also edits incorrectly charged Ser-tRNA(Ala) and Gly-tRNA(Ala) via its editing domain. This Lactobacillus johnsonii (strain CNCM I-12250 / La1 / NCC 533) protein is Alanine--tRNA ligase.